The following is a 362-amino-acid chain: Heat-inducible transcription repressor HrcA (362 aa).

Belongs to the HrcA family.

In terms of biological role, negative regulator of class I heat shock genes (grpE-dnaK-dnaJ and groELS operons). Prevents heat-shock induction of these operons. The sequence is that of Heat-inducible transcription repressor HrcA from Rhizobium johnstonii (strain DSM 114642 / LMG 32736 / 3841) (Rhizobium leguminosarum bv. viciae).